Reading from the N-terminus, the 254-residue chain is SLA class II histocompatibility antigen, DQ haplotype C alpha chain (254 aa).

The N-terminal stretch at 1–23 (MVPGRVLMWGALALTTVMSACGG) is a signal peptide. The segment at 24-120 (EDIAADHVAS…KVPEVTVFSK (97 aa)) is alpha-1. At 24–216 (EDIAADHVAS…IPAPMSELTE (193 aa)) the chain is on the extracellular side. Residues N104 and N144 are each glycosylated (N-linked (GlcNAc...) asparagine). In terms of domain architecture, Ig-like C1-type spans 113–204 (PEVTVFSKSP…LDKPLLKHWE (92 aa)). The segment at 121–203 (SPVILGQPNT…GLDKPLLKHW (83 aa)) is alpha-2. A disulfide bridge links C133 with C188. Residues 204–216 (EPEIPAPMSELTE) form a connecting peptide region. Residues 217-239 (TVVCALGLIVGLVGIVVGTVFII) form a helical membrane-spanning segment. Residues 240–254 (QGLRSGGPSRHQGSL) are Cytoplasmic-facing.

Belongs to the MHC class II family.

The protein resides in the membrane. The chain is SLA class II histocompatibility antigen, DQ haplotype C alpha chain from Sus scrofa (Pig).